A 775-amino-acid chain; its full sequence is Transcription activator of gluconeogenesis HCBG_00867 (775 aa).

The interval M1 to R70 is disordered. 2 stretches are compositionally biased toward polar residues: residues N21–A41 and T48–A60. The segment at residues C77–C105 is a DNA-binding region (zn(2)-C6 fungal-type). Disordered regions lie at residues T179–A248, G286–N351, N556–G592, and Q649–Q725. Polar residues predominate over residues M195 to D217. Positions L218–S229 are enriched in low complexity. Polar residues-rich tracts occupy residues A230–D244, P292–P323, W334–N351, and L557–N576. A compositionally biased stretch (gly residues) spans G657–D668. Over residues V669–A713 the composition is skewed to low complexity.

It belongs to the ERT1/acuK family.

It localises to the nucleus. Functionally, transcription factor which regulates nonfermentable carbon utilization. Activator of gluconeogenetic genes. The protein is Transcription activator of gluconeogenesis HCBG_00867 of Ajellomyces capsulatus (strain G186AR / H82 / ATCC MYA-2454 / RMSCC 2432) (Darling's disease fungus).